We begin with the raw amino-acid sequence, 384 residues long: tRNA-specific 2-thiouridylase MnmA (384 aa).

Residues 9–16 and Met35 contribute to the ATP site; that span reads GMSGGVDS. Positions 95 to 97 are interaction with target base in tRNA; it reads NPD. Cys100 acts as the Nucleophile in catalysis. A disulfide bridge links Cys100 with Cys196. Gly124 contacts ATP. The segment at 146-148 is interaction with tRNA; the sequence is KDQ. The active-site Cysteine persulfide intermediate is the Cys196. The interval 308–309 is interaction with tRNA; sequence RY.

Belongs to the MnmA/TRMU family.

The protein resides in the cytoplasm. It catalyses the reaction S-sulfanyl-L-cysteinyl-[protein] + uridine(34) in tRNA + AH2 + ATP = 2-thiouridine(34) in tRNA + L-cysteinyl-[protein] + A + AMP + diphosphate + H(+). Catalyzes the 2-thiolation of uridine at the wobble position (U34) of tRNA, leading to the formation of s(2)U34. This chain is tRNA-specific 2-thiouridylase MnmA, found in Burkholderia vietnamiensis (strain G4 / LMG 22486) (Burkholderia cepacia (strain R1808)).